The chain runs to 335 residues: Transcriptional coactivator YAP1-B (335 aa).

Positions 1–13 (MEPGSQQQPSAPG) are enriched in low complexity. Residues 1 to 21 (MEPGSQQQPSAPGQQPPPVGH) form a disordered region. The residue at position 30 (Ser-30) is a Phosphoserine; by LATS1 and LATS2. Residues 114-124 (MNQQRLSQSAP) are compositionally biased toward polar residues. Residues 114 to 146 (MNQQRLSQSAPVKSPPALQPQSPPSGVLGSGGN) are disordered. Over residues 126–136 (KSPPALQPQSP) the composition is skewed to pro residues. The segment at 137 to 335 (PSGVLGSGGN…LDKESFLTWL (199 aa)) is transactivation domain. Residues 145-173 (GNQQMRLQQLQMEKERLRLKHQELLRQVR) adopt a coiled-coil conformation.

It belongs to the YAP1 family. Post-translationally, phosphorylated by lats1 and lats2; leading to cytoplasmic translocation and inactivation.

It localises to the cytoplasm. It is found in the nucleus. The protein localises to the cell junction. Its subcellular location is the tight junction. The protein resides in the cell membrane. Transcriptional regulator which can act both as a coactivator and a corepressor and is the critical downstream regulatory target in the Hippo signaling pathway that plays a pivotal role in organ size control and tumor suppression by restricting proliferation and promoting apoptosis. Plays a key role in tissue tension and 3D tissue shape by regulating cortical actomyosin network formation. This is Transcriptional coactivator YAP1-B from Xenopus laevis (African clawed frog).